Reading from the N-terminus, the 211-residue chain is uncharacterized protein (211 aa).

Helical transmembrane passes span 22 to 42, 111 to 131, and 133 to 153; these read FINFVRIAICIVMVWIGGLKV, IIGATIVTVGLLTLSGIWFPV, and GMAGGLLTFGMSIVTLSFMIT.

The protein to E.coli YkgB. To H.influenzae HI_0219.

The protein localises to the cell membrane. This is an uncharacterized protein from Mannheimia haemolytica (Pasteurella haemolytica).